A 281-amino-acid polypeptide reads, in one-letter code: ATP synthase gamma chain (281 aa).

It belongs to the ATPase gamma chain family. In terms of assembly, F-type ATPases have 2 components, CF(1) - the catalytic core - and CF(0) - the membrane proton channel. CF(1) has five subunits: alpha(3), beta(3), gamma(1), delta(1), epsilon(1). CF(0) has three main subunits: a, b and c.

It is found in the cell membrane. Produces ATP from ADP in the presence of a proton gradient across the membrane. The gamma chain is believed to be important in regulating ATPase activity and the flow of protons through the CF(0) complex. This is ATP synthase gamma chain from Mesoplasma florum (strain ATCC 33453 / NBRC 100688 / NCTC 11704 / L1) (Acholeplasma florum).